The sequence spans 423 residues: Histidine--tRNA ligase (423 aa).

The protein belongs to the class-II aminoacyl-tRNA synthetase family. As to quaternary structure, homodimer.

The protein localises to the cytoplasm. The enzyme catalyses tRNA(His) + L-histidine + ATP = L-histidyl-tRNA(His) + AMP + diphosphate + H(+). In Halorhodospira halophila (strain DSM 244 / SL1) (Ectothiorhodospira halophila (strain DSM 244 / SL1)), this protein is Histidine--tRNA ligase.